Consider the following 538-residue polypeptide: Cytochrome P450 18a1 (538 aa).

Residues 24–44 traverse the membrane as a helical segment; the sequence is QHLLMVFLGLLALVTLLQWLV. Cys-466 serves as a coordination point for heme.

It belongs to the cytochrome P450 family. Heme is required as a cofactor. As to expression, expressed in body wall (epidermal and muscle cells) and mid- and hind-gut.

The protein localises to the endoplasmic reticulum membrane. It is found in the microsome membrane. Probably involved in steroid hormones biosynthesis. The sequence is that of Cytochrome P450 18a1 (Cyp18a1) from Drosophila melanogaster (Fruit fly).